We begin with the raw amino-acid sequence, 223 residues long: Mitochondrial cardiolipin hydrolase (223 aa).

Topologically, residues 1–6 (MGCASS) are mitochondrial intermembrane. A helical transmembrane segment spans residues 7 to 24 (KEEVALTPLSDVNAAKEV). At 25–223 (ADLKAQVDQL…QFDKLWDMFK (199 aa)) the chain is on the cytoplasmic side. One can recognise a PLD phosphodiesterase domain in the interval 164-191 (TAAHMHHKFAIIDGRLLLNGSFNWTRQA). Catalysis depends on residues H169, K171, and D176.

This sequence belongs to the phospholipase D family. MitoPLD/Zucchini subfamily. As to quaternary structure, homodimer.

Its subcellular location is the mitochondrion outer membrane. In terms of biological role, plays a critical role in PIWI-interacting RNA (piRNA) biogenesis. piRNAs provide essential protection against the activity of mobile genetic elements. piRNA-mediated transposon silencing is thus critical for maintaining genome stability. Backbone-non-specific, single strand-specific nuclease, cleaving either RNA or DNA substrates with similar affinity. Produces 5' phosphate and 3' hydroxyl termini, suggesting it could directly participate in the processing of primary piRNA transcripts. Has been proposed to act as a cardiolipin hydrolase to generate phosphatidic acid at mitochondrial surface. Although it cannot be excluded that it can act as a phospholipase in some circumstances, this activity could not be confirmed. The protein is Mitochondrial cardiolipin hydrolase of Chlamydomonas reinhardtii (Chlamydomonas smithii).